A 389-amino-acid chain; its full sequence is Na(+)/H(+) antiporter NhaA (389 aa).

A run of 11 helical transmembrane segments spans residues 17 to 37 (ILLLVAVALAMLMANSPLAGL), 59 to 79 (LLLWINDGLMALFFLLIGLEV), 95 to 115 (SLPTFAAIGGMLVPAGIYLLF), 124 to 144 (AGWAIPAATDIAFALGIMALL), 154 to 174 (VFLLALAIIDDLGVIVIIALF), 177 to 197 (TDLSTISLIIASIAIVGLVAL), 213 to 233 (LVLWVAVLKSGVHATLAGVII), 261 to 281 (FLILPVFAFANAGVALGNMSL), 287 to 307 (PVPVGIALGLMLGKPIGVMLF), 328 to 348 (IAPVAAMCGIGFTMSMFIASL), and 363 to 383 (LGTLIGSILAALIGYFWLSKV).

The protein belongs to the NhaA Na(+)/H(+) (TC 2.A.33) antiporter family.

The protein localises to the cell inner membrane. The catalysed reaction is Na(+)(in) + 2 H(+)(out) = Na(+)(out) + 2 H(+)(in). Its function is as follows. Na(+)/H(+) antiporter that extrudes sodium in exchange for external protons. This is Na(+)/H(+) antiporter NhaA from Shewanella sp. (strain MR-4).